Consider the following 220-residue polypeptide: Demethylmenaquinone methyltransferase (220 aa).

S-adenosyl-L-methionine is bound by residues Thr-47, Asp-67, and 93-94; that span reads DA.

The protein belongs to the class I-like SAM-binding methyltransferase superfamily. MenG/UbiE family.

The enzyme catalyses a 2-demethylmenaquinol + S-adenosyl-L-methionine = a menaquinol + S-adenosyl-L-homocysteine + H(+). The protein operates within quinol/quinone metabolism; menaquinone biosynthesis; menaquinol from 1,4-dihydroxy-2-naphthoate: step 2/2. In terms of biological role, methyltransferase required for the conversion of demethylmenaquinol (DMKH2) to menaquinol (MKH2). In Thermus thermophilus (strain ATCC BAA-163 / DSM 7039 / HB27), this protein is Demethylmenaquinone methyltransferase.